A 215-amino-acid polypeptide reads, in one-letter code: Cytidylate kinase (215 aa).

10-18 (GPAASGKGT) lines the ATP pocket.

Belongs to the cytidylate kinase family. Type 1 subfamily.

It is found in the cytoplasm. The enzyme catalyses CMP + ATP = CDP + ADP. The catalysed reaction is dCMP + ATP = dCDP + ADP. The chain is Cytidylate kinase from Bartonella quintana (strain Toulouse) (Rochalimaea quintana).